Consider the following 194-residue polypeptide: Thymidine kinase (194 aa).

Residues 15–22 and 88–91 contribute to the ATP site; these read GSMFSGKS and DEVQ. Glutamate 89 serves as the catalytic Proton acceptor. Zn(2+) contacts are provided by cysteine 145, cysteine 148, cysteine 183, and histidine 186.

Belongs to the thymidine kinase family. In terms of assembly, homotetramer.

Its subcellular location is the cytoplasm. It carries out the reaction thymidine + ATP = dTMP + ADP + H(+). The sequence is that of Thymidine kinase from Bacillus velezensis (strain DSM 23117 / BGSC 10A6 / LMG 26770 / FZB42) (Bacillus amyloliquefaciens subsp. plantarum).